The sequence spans 219 residues: MSETAPAAPAAPAPAEKTPVKKKARKSAGAAKRKASGPPVSELITKAVAASKERSGVSLAALKKALAAAGYDVEKNNSRIKLGLKSLVSKGTLVQTKGTGASGSFKLNKKAASGEAKPKAKKAGAAKAKKPAGAAKKPKKATGAATPKKSAKKTPKKAKKPAAAAGAKKAKSPKKAKAAKPKKAPKSPAKAKAVKPKAAKPKTAKPKAAKPKKAAAKKK.

The segment covering 1 to 15 has biased composition (low complexity); the sequence is MSETAPAAPAAPAPA. The tract at residues 1–41 is disordered; it reads MSETAPAAPAAPAPAEKTPVKKKARKSAGAAKRKASGPPVS. The residue at position 2 (serine 2) is an N-acetylserine. A Phosphoserine modification is found at serine 2. N6-acetyllysine is present on lysine 17. Threonine 18 carries the phosphothreonine modification. The span at 20–35 shows a compositional bias: basic residues; the sequence is VKKKARKSAGAAKRKA. At lysine 26 the chain carries N6-acetyllysine; alternate. The residue at position 26 (lysine 26) is an N6-methyllysine; alternate. Lysine 34 bears the N6-(beta-hydroxybutyryl)lysine; alternate mark. The residue at position 34 (lysine 34) is an N6-succinyllysine; alternate. Serine 36 is modified (phosphoserine). Residues 36–109 form the H15 domain; that stretch reads SGPPVSELIT…GASGSFKLNK (74 aa). Lysine 52 is subject to N6-(beta-hydroxybutyryl)lysine. Citrulline is present on arginine 54. N6-(beta-hydroxybutyryl)lysine occurs at positions 64, 85, 90, and 106. The tract at residues 92-219 is disordered; it reads TLVQTKGTGA…KPKKAAAKKK (128 aa). A compositionally biased stretch (basic residues) spans 119-140; it reads KAKKAGAAKAKKPAGAAKKPKK. A Phosphothreonine modification is found at threonine 146. 2 stretches are compositionally biased toward basic residues: residues 149-160 and 168-185; these read KSAKKTPKKAKK and KKAK…KKAP. Serine 150 carries the post-translational modification ADP-ribosylserine. At serine 187 the chain carries Phosphoserine. Residues 192 to 219 are compositionally biased toward basic residues; that stretch reads KAVKPKAAKPKTAKPKAAKPKKAAAKKK.

The protein belongs to the histone H1/H5 family. In terms of processing, H1 histones are progressively phosphorylated during the cell cycle, becoming maximally phosphorylated during late G2 phase and M phase, and being dephosphorylated sharply thereafter. Post-translationally, acetylated at Lys-26. Deacetylated at Lys-26 by SIRT1. Citrullination at Arg-54 (H1R54ci) by PADI4 takes place within the DNA-binding site of H1 and results in its displacement from chromatin and global chromatin decondensation, thereby promoting pluripotency and stem cell maintenance. In terms of processing, ADP-ribosylated on Ser-150 in response to DNA damage.

The protein resides in the nucleus. Its subcellular location is the chromosome. Its function is as follows. Histone H1 protein binds to linker DNA between nucleosomes forming the macromolecular structure known as the chromatin fiber. Histones H1 are necessary for the condensation of nucleosome chains into higher-order structured fibers. Also acts as a regulator of individual gene transcription through chromatin remodeling, nucleosome spacing and DNA methylation. This is Histone H1.4 from Homo sapiens (Human).